Consider the following 527-residue polypeptide: Protein TIC 56, chloroplastic (527 aa).

The transit peptide at 1–48 (MSSMNFNPFQNWFEKPPNPVPSINFVSLADSFFPKSQSPNFASIGLPK) directs the protein to the chloroplast. Residues 43–67 (SIGLPKFSKKSPKPETAGTDEPGPY) form a disordered region. At Asn-350 the chain carries Deamidated asparagine. Residues 491–508 (RREEELREEDLKHYSGRT) show a composition bias toward basic and acidic residues. A disordered region spans residues 491 to 527 (RREEELREEDLKHYSGRTDEDEEEEEEEDDDSNSKKD). The segment covering 509–521 (DEDEEEEEEEDDD) has biased composition (acidic residues).

In terms of assembly, part of the Tic complex. Component of the 1-MD complex, composed of TIC20-I, TIC214, TIC100 and TIC56. Interacts with the translocating preproteins. Hydrolysis of ATP is essential for the formation of this complex. The 1-MD complex interacts with TIC21.

It is found in the plastid. The protein resides in the chloroplast inner membrane. Its function is as follows. Involved in protein precursor import into chloroplasts. May be part of an intermediate translocation complex acting as a protein-conducting channel at the inner envelope. The polypeptide is Protein TIC 56, chloroplastic (Arabidopsis thaliana (Mouse-ear cress)).